Reading from the N-terminus, the 364-residue chain is Caffeic acid 3-O-methyltransferase (364 aa).

Position 131–137 (methionine 131–leucine 137) interacts with substrate. Residues alanine 163–methionine 181 are substrate binding. 5 residues coordinate S-adenosyl-L-methionine: glycine 209, aspartate 232, aspartate 252, methionine 253, and lysine 266. The active-site Proton acceptor is the histidine 270.

This sequence belongs to the class I-like SAM-binding methyltransferase superfamily. Cation-independent O-methyltransferase family. COMT subfamily. Homodimer. As to expression, confined to the vascular tissues of organs undergoing lignification such as stems and roots.

The catalysed reaction is (E)-caffeate + S-adenosyl-L-methionine = (E)-ferulate + S-adenosyl-L-homocysteine + H(+). It carries out the reaction tricetin + 2 S-adenosyl-L-methionine = 3',5'-di-O-methyltricetin + 2 S-adenosyl-L-homocysteine + 2 H(+). The enzyme catalyses luteolin + S-adenosyl-L-methionine = chrysoeriol + S-adenosyl-L-homocysteine + H(+). It catalyses the reaction tricetin + S-adenosyl-L-methionine = 3'-O-methyltricetin + S-adenosyl-L-homocysteine + H(+). It participates in aromatic compound metabolism; phenylpropanoid biosynthesis. In terms of biological role, catalyzes the conversion of caffeic acid to ferulic acid and of 5-hydroxyferulic acid to sinapic acid. The resulting products may subsequently be converted to the corresponding alcohols that are incorporated into lignins. Can use the flavone tricetin (5,7,3',4',5'-pentahydroxyflavone) as the preferred substrate and give rise to its 3',5'-dimethyl derivative, tricin (3',5'-dimethoxy-5,7,4'-trihydroxyflavone), as the major product, and selgin to a lower extent. Tricin exhibits potential benefits for human health including relaxant effect on smooth muscle of intestinal tissues, antioxidant effect, antihistaminic activity, and growth inhibition of human malignant breast tumor cells and colon cancer cells. Can also use luteolin, quercetin and 5-hydroxyferulic acid (5HF) as substrates. In Zea mays (Maize), this protein is Caffeic acid 3-O-methyltransferase.